We begin with the raw amino-acid sequence, 652 residues long: Leucine-rich repeat-containing protein 4 (652 aa).

Residues 1 to 40 form the signal peptide; the sequence is MKLLWQVTVHHTWNAVLLPVVYLTAQVWILCAAIAAAASA. One can recognise an LRRNT domain in the interval 41–74; it reads GPQNCPSVCSCSNQFSKVVCTRRGLSEVPQGIPS. Over 41 to 526 the chain is Extracellular; that stretch reads GPQNCPSVCS…SLDEVMKTTK (486 aa). Intrachain disulfides connect Cys-45–Cys-51 and Cys-49–Cys-60. 9 LRR repeats span residues 75–96, 99–120, 123–144, 147–168, 171–193, 196–217, 218–239, 242–263, and 266–287; these read NTRY…TFRH, HLEV…AFNG, SLNT…AFEY, KLRE…AFNR, SLMR…AFEG, NLKY…TPLV, GLEE…SFHG, SLKK…AFDG, and SLVE…LFTP. N-linked (GlcNAc...) asparagine glycosylation is found at Asn-276, Asn-321, Asn-362, Asn-387, Asn-409, Asn-433, Asn-439, and Asn-449. The region spanning 299–351 is the LRRCT domain; it reads NPWNCDCDILWLAWWLREYIPTNSTCCGRCHAPMHMRGRYLVEVDQAAFQCSA. 2 disulfides stabilise this stretch: Cys-303-Cys-328 and Cys-305-Cys-349. In terms of domain architecture, Ig-like spans 352 to 441; sequence PFIMDAPRDL…SNASAYLNVS (90 aa). Cys-373 and Cys-423 are joined by a disulfide. The helical transmembrane segment at 527 to 547 threads the bilayer; sequence IIIGCFVAVTLLAAAMLIVFY. The Cytoplasmic portion of the chain corresponds to 548 to 652; sequence KLRKRHQQRS…TKDKVQETQI (105 aa).

In terms of assembly, interacts (via LRR repeats) with NTNG2. Interacts with DLG4. Forms a complex with DLG4 and with NMDA receptors. In terms of processing, N-glycosylated. As to expression, specifically expressed in brain. In the hippocampus, parietal cortex and piriform cortex expressed in proximal segments of CA1 pyramidal neurons.

Its subcellular location is the membrane. It is found in the postsynaptic cell membrane. Its function is as follows. Synaptic adhesion protein. Regulates the formation of exitatory synapses through the recruitment of pre-and-postsynaptic proteins. Organize the lamina/pathway-specific differentiation of dendrites. Plays an important role for auditory synaptic responses. Involved in the suppression of glioma. The polypeptide is Leucine-rich repeat-containing protein 4 (Lrrc4) (Mus musculus (Mouse)).